Reading from the N-terminus, the 394-residue chain is Actin-related protein 2 (394 aa).

The residue at position 1 (Met-1) is an N-acetylmethionine. ATP is bound by residues Gly-160 to Gly-162 and Arg-214 to Glu-218. Position 299 is an N6-acetyllysine (Lys-299). An ATP-binding site is contributed by Gly-305 to Tyr-310. N6-acetyllysine is present on Lys-322.

The protein belongs to the actin family. ARP2 subfamily. As to quaternary structure, component of the Arp2/3 complex composed of ACTR2/ARP2, ACTR3/ARP3, ARPC1B/p41-ARC, ARPC2/p34-ARC, ARPC3/p21-ARC, ARPC4/p20-ARC and ARPC5/p16-ARC.

It localises to the cytoplasm. It is found in the cytoskeleton. Its subcellular location is the cell projection. The protein resides in the nucleus. Functionally, ATP-binding component of the Arp2/3 complex, a multiprotein complex that mediates actin polymerization upon stimulation by nucleation-promoting factor (NPF). The Arp2/3 complex mediates the formation of branched actin networks in the cytoplasm, providing the force for cell motility. Seems to contact the pointed end of the daughter actin filament. In addition to its role in the cytoplasmic cytoskeleton, the Arp2/3 complex also promotes actin polymerization in the nucleus, thereby regulating gene transcription and repair of damaged DNA. The Arp2/3 complex promotes homologous recombination (HR) repair in response to DNA damage by promoting nuclear actin polymerization, leading to drive motility of double-strand breaks (DSBs). The sequence is that of Actin-related protein 2 (Actr2) from Rattus norvegicus (Rat).